The following is a 767-amino-acid chain: MTISPPESGEKNKKVLEDPVKADPRPIDFAKLDKPGFWSTKLSKGPKTTTWIWNLHADAHDFDVHTGDAEEATRKIFSAHFGHLAIIFIWMSAAFFHGARFSNYTGWLADPTNVKPGAQQVWAVVGQEMLNGNLGADYNGIQISSGIFHMWRAWGITNESELMALAIGAVIMAALMLHGGIYHYHKAAPKLEWFQNIESMLNHHIAGLVGLGSLAWAGHCIHIGAPTAALLDAIDAGSPLVINGQKIATIADMPMPHQLCDPQIIGQIFPGLASGVGNFFSLNWFAFSDFLTFKGGLNPVTGSLWMTDIAHHHLAFGVIAIIGGHLYRTNYGIGSSMKEILEAHQGDPILFPAPKGHQGLFEFMAESRHAQLSVNLACLGSLSILISHHMYAMPPYPYIATDYMTVLGLFTHHMWIGALFIVGAGAHAGIAMVRDYDPAKHIDNVLDRILKARDALISHLNWVCMWLGFHSFGLYIHNDTMRALGRPQDMFSDNAIQLQPIFAQWVQSIQASAVGTSILAGTPEGLPQKALSEVFNGSLVEVGGKVAISPIQLGTADLMIHHIHAFQIHVTVLILLKGVLYARSSRLIPDKASLGFRFPCDGPGRGGTCQVSSWDHVFLALFWMYNCISIVIFHFSWKMQSDVWGLTGGNFSQSAITINGWLRDFLWAQSSQVLTSYGEAISMYGLMFLGAHFIWAFSLMFLFSGRGYWQELFESIVWAHNKLKVAPTIQPRALSITQGRAVGVAHFLLGGIATTWAFFHARLFGLG.

The interval Met1 to Ala22 is disordered. Positions Ser8–Ala22 are enriched in basic and acidic residues. 8 consecutive transmembrane segments (helical) span residues Ile76 to Ala99, Leu162 to His185, Leu201 to Ala225, Ile309 to Tyr327, Arg368 to Tyr391, Leu407 to Val433, Ala455 to His477, and Leu558 to Leu576. [4Fe-4S] cluster is bound by residues Cys600 and Cys609. The next 2 membrane-spanning stretches (helical) occupy residues His616 to Trp637 and Ile681 to Phe703. His692 is a binding site for divinylchlorophyll a'. Divinyl chlorophyll a contacts are provided by Met700 and Tyr708. Position 709 (Trp709) interacts with phylloquinone. The chain crosses the membrane as a helical span at residues Ala741–Ala761.

The protein belongs to the PsaA/PsaB family. In terms of assembly, the PsaA/B heterodimer binds the P700 divinyl chlorophyll special pair and subsequent electron acceptors. PSI consists of a core antenna complex that captures photons, and an electron transfer chain that converts photonic excitation into a charge separation. The cyanobacterial PSI reaction center is composed of one copy each of PsaA,B,C,D,E,F,I,J,K,L,M and X, and forms trimeric complexes. PSI electron transfer chain: 5 divinyl chlorophyll a, 1 divinyl chlorophyll a', 2 phylloquinones and 3 4Fe-4S clusters. PSI core antenna: 90 divinyl chlorophyll a, 22 carotenoids, 3 phospholipids and 1 galactolipid. P700 is a divinyl chlorophyll a/divinyl chlorophyll a' dimer, A0 is one or more divinyl chlorophyll a, A1 is one or both phylloquinones and FX is a shared 4Fe-4S iron-sulfur center. serves as cofactor.

The protein resides in the cellular thylakoid membrane. The enzyme catalyses reduced [plastocyanin] + hnu + oxidized [2Fe-2S]-[ferredoxin] = oxidized [plastocyanin] + reduced [2Fe-2S]-[ferredoxin]. In terms of biological role, psaA and PsaB bind P700, the primary electron donor of photosystem I (PSI), as well as the electron acceptors A0, A1 and FX. PSI is a plastocyanin/cytochrome c6-ferredoxin oxidoreductase, converting photonic excitation into a charge separation, which transfers an electron from the donor P700 chlorophyll pair to the spectroscopically characterized acceptors A0, A1, FX, FA and FB in turn. Oxidized P700 is reduced on the lumenal side of the thylakoid membrane by plastocyanin or cytochrome c6. The sequence is that of Photosystem I P700 chlorophyll a apoprotein A1 from Prochlorococcus marinus (strain MIT 9312).